The primary structure comprises 693 residues: DNA ligase (693 aa).

NAD(+) contacts are provided by residues Asp-40–Asp-44, Ser-89–Leu-90, and Glu-121. The active-site N6-AMP-lysine intermediate is the Lys-123. NAD(+)-binding residues include Arg-144, Glu-179, Lys-295, and Lys-319. Residues Cys-413, Cys-416, Cys-431, and Cys-437 each contribute to the Zn(2+) site. Residues Arg-610–Val-693 enclose the BRCT domain.

This sequence belongs to the NAD-dependent DNA ligase family. LigA subfamily. It depends on Mg(2+) as a cofactor. The cofactor is Mn(2+).

The catalysed reaction is NAD(+) + (deoxyribonucleotide)n-3'-hydroxyl + 5'-phospho-(deoxyribonucleotide)m = (deoxyribonucleotide)n+m + AMP + beta-nicotinamide D-nucleotide.. DNA ligase that catalyzes the formation of phosphodiester linkages between 5'-phosphoryl and 3'-hydroxyl groups in double-stranded DNA using NAD as a coenzyme and as the energy source for the reaction. It is essential for DNA replication and repair of damaged DNA. In Rickettsia typhi (strain ATCC VR-144 / Wilmington), this protein is DNA ligase.